The primary structure comprises 129 residues: Ferredoxin-1 (129 aa).

In terms of domain architecture, 2Fe-2S ferredoxin-type spans S29 to H120. Positions 64, 69, 72, and 103 each coordinate [2Fe-2S] cluster.

This sequence belongs to the 2Fe2S plant-type ferredoxin family. [2Fe-2S] cluster is required as a cofactor.

Its function is as follows. Ferredoxins are iron-sulfur proteins that transfer electrons in a wide variety of metabolic reactions. The sequence is that of Ferredoxin-1 (fer1) from Haloarcula marismortui (strain ATCC 43049 / DSM 3752 / JCM 8966 / VKM B-1809) (Halobacterium marismortui).